The sequence spans 634 residues: Threonine--tRNA ligase (634 aa).

The 61-residue stretch at 1–61 folds into the TGS domain; that stretch reads MINIRFPDGS…NSNCELRLIT (61 aa). The catalytic stretch occupies residues 241-532; it reads DHRKIGKVLD…LIEHYAGNLP (292 aa). Cys-332, His-383, and His-509 together coordinate Zn(2+).

It belongs to the class-II aminoacyl-tRNA synthetase family. As to quaternary structure, homodimer. Zn(2+) serves as cofactor.

The protein resides in the cytoplasm. The catalysed reaction is tRNA(Thr) + L-threonine + ATP = L-threonyl-tRNA(Thr) + AMP + diphosphate + H(+). In terms of biological role, catalyzes the attachment of threonine to tRNA(Thr) in a two-step reaction: L-threonine is first activated by ATP to form Thr-AMP and then transferred to the acceptor end of tRNA(Thr). Also edits incorrectly charged L-seryl-tRNA(Thr). The chain is Threonine--tRNA ligase from Francisella tularensis subsp. novicida (strain U112).